A 120-amino-acid chain; its full sequence is Ribosome-binding factor A (120 aa).

Belongs to the RbfA family. As to quaternary structure, monomer. Binds 30S ribosomal subunits, but not 50S ribosomal subunits or 70S ribosomes.

The protein localises to the cytoplasm. One of several proteins that assist in the late maturation steps of the functional core of the 30S ribosomal subunit. Associates with free 30S ribosomal subunits (but not with 30S subunits that are part of 70S ribosomes or polysomes). Required for efficient processing of 16S rRNA. May interact with the 5'-terminal helix region of 16S rRNA. The sequence is that of Ribosome-binding factor A from Buchnera aphidicola subsp. Acyrthosiphon pisum (strain 5A).